The primary structure comprises 635 residues: Chaperone protein HtpG (635 aa).

The segment at 1–337 (MELKMHNVQE…SPDLPLNISR (337 aa)) is a; substrate-binding. The segment at 338 to 556 (ETLQNNRVVE…EGAMDLRMER (219 aa)) is b. The segment at 557-635 (FLREQKQLNY…LNNLLGKISV (79 aa)) is c.

This sequence belongs to the heat shock protein 90 family. Homodimer.

It is found in the cytoplasm. In terms of biological role, molecular chaperone. Has ATPase activity. The protein is Chaperone protein HtpG of Wolbachia pipientis wMel.